Consider the following 353-residue polypeptide: Histidinol-phosphate aminotransferase (353 aa).

The residue at position 209 (Lys209) is an N6-(pyridoxal phosphate)lysine.

This sequence belongs to the class-II pyridoxal-phosphate-dependent aminotransferase family. Histidinol-phosphate aminotransferase subfamily. As to quaternary structure, homodimer. The cofactor is pyridoxal 5'-phosphate.

The catalysed reaction is L-histidinol phosphate + 2-oxoglutarate = 3-(imidazol-4-yl)-2-oxopropyl phosphate + L-glutamate. It participates in amino-acid biosynthesis; L-histidine biosynthesis; L-histidine from 5-phospho-alpha-D-ribose 1-diphosphate: step 7/9. In Buchnera aphidicola subsp. Cinara cedri (strain Cc), this protein is Histidinol-phosphate aminotransferase.